The primary structure comprises 498 residues: Fascin-3 (498 aa).

It belongs to the fascin family. As to expression, expressed in testis.

The protein resides in the cytoplasm. It is found in the cytoskeleton. Functionally, acts as an actin bundling protein. This is Fascin-3 (Fscn3) from Mus musculus (Mouse).